The following is a 350-amino-acid chain: Deoxyhypusine synthase-like protein (350 aa).

It belongs to the deoxyhypusine synthase family.

This is Deoxyhypusine synthase-like protein from Chlorobaculum parvum (strain DSM 263 / NCIMB 8327) (Chlorobium vibrioforme subsp. thiosulfatophilum).